Reading from the N-terminus, the 289-residue chain is 4-hydroxy-3-methylbut-2-enyl diphosphate reductase (289 aa).

Cysteine 13 contacts [4Fe-4S] cluster. (2E)-4-hydroxy-3-methylbut-2-enyl diphosphate is bound by residues histidine 42 and histidine 76. Positions 42 and 76 each coordinate dimethylallyl diphosphate. Residues histidine 42 and histidine 76 each coordinate isopentenyl diphosphate. Cysteine 98 contacts [4Fe-4S] cluster. Histidine 130 is a binding site for (2E)-4-hydroxy-3-methylbut-2-enyl diphosphate. Position 130 (histidine 130) interacts with dimethylallyl diphosphate. An isopentenyl diphosphate-binding site is contributed by histidine 130. Glutamate 132 functions as the Proton donor in the catalytic mechanism. Residue threonine 168 coordinates (2E)-4-hydroxy-3-methylbut-2-enyl diphosphate. Cysteine 199 lines the [4Fe-4S] cluster pocket. (2E)-4-hydroxy-3-methylbut-2-enyl diphosphate-binding residues include serine 227, serine 228, asparagine 229, and serine 272. Positions 227, 228, 229, and 272 each coordinate dimethylallyl diphosphate. Residues serine 227, serine 228, asparagine 229, and serine 272 each contribute to the isopentenyl diphosphate site.

This sequence belongs to the IspH family. [4Fe-4S] cluster serves as cofactor.

It catalyses the reaction isopentenyl diphosphate + 2 oxidized [2Fe-2S]-[ferredoxin] + H2O = (2E)-4-hydroxy-3-methylbut-2-enyl diphosphate + 2 reduced [2Fe-2S]-[ferredoxin] + 2 H(+). The enzyme catalyses dimethylallyl diphosphate + 2 oxidized [2Fe-2S]-[ferredoxin] + H2O = (2E)-4-hydroxy-3-methylbut-2-enyl diphosphate + 2 reduced [2Fe-2S]-[ferredoxin] + 2 H(+). The protein operates within isoprenoid biosynthesis; dimethylallyl diphosphate biosynthesis; dimethylallyl diphosphate from (2E)-4-hydroxy-3-methylbutenyl diphosphate: step 1/1. It participates in isoprenoid biosynthesis; isopentenyl diphosphate biosynthesis via DXP pathway; isopentenyl diphosphate from 1-deoxy-D-xylulose 5-phosphate: step 6/6. Its function is as follows. Catalyzes the conversion of 1-hydroxy-2-methyl-2-(E)-butenyl 4-diphosphate (HMBPP) into a mixture of isopentenyl diphosphate (IPP) and dimethylallyl diphosphate (DMAPP). Acts in the terminal step of the DOXP/MEP pathway for isoprenoid precursor biosynthesis. This chain is 4-hydroxy-3-methylbut-2-enyl diphosphate reductase, found in Porphyromonas gingivalis (strain ATCC BAA-308 / W83).